The sequence spans 103 residues: Cell division protein CrgA (103 aa).

A run of 2 helical transmembrane segments spans residues 49-69 (FVPLFCALMIIGLIWCVVYYL) and 80-100 (IGAWNLGIGFALIMIGFLMTM).

Belongs to the CrgA family.

Its subcellular location is the cell membrane. In terms of biological role, involved in cell division. This chain is Cell division protein CrgA, found in Bifidobacterium longum (strain NCC 2705).